The sequence spans 430 residues: MGKNVVVLGTQWGDEGKGKIVDLLTEHAAAVVRYQGGHNAGHTLVIDGEKTVLHLIPSGVLREGVQCLIGNGVVVAPDALMREIVKLEEKGVPVRERLRISPSCPLILSYHVALDQAREKARGEQKIGTTGRGIGPAYEDKVARRGLRIGDLFHRERFAAKLGELLDYHNFVLVNYYKEPAIDFQKTLDECMEYAELLKPMMLDVTAELHQLRRAGKDIMFEGAQGSLLDIDHGTYPYVTSSNTTAGGIATGSGVGPMYLDYILGITKAYTTRVGSGPFPTELFDDIGAFLAKRGHEFGATTGRARRCGWFDAVILRRAIDVNSISGLCLTKLDVLDGLETINICVGYKNQDGAVIDAPTDADSYIGLEPVYEQMPGWSESTLGAKTLEELPAAAQAYIKRIEELVGAPIDIISTGPDRNETIVLRHPFA.

Residues 13–19 (GDEGKGK) and 41–43 (GHT) contribute to the GTP site. Residue D14 is the Proton acceptor of the active site. The Mg(2+) site is built by D14 and G41. IMP contacts are provided by residues 14-17 (DEGK), 39-42 (NAGH), T130, R144, Q225, T240, and R304. H42 (proton donor) is an active-site residue. 300-306 (ATTGRAR) contributes to the substrate binding site. GTP contacts are provided by residues R306, 332–334 (KLD), and 414–416 (STG).

It belongs to the adenylosuccinate synthetase family. In terms of assembly, homodimer. Mg(2+) serves as cofactor.

Its subcellular location is the cytoplasm. It catalyses the reaction IMP + L-aspartate + GTP = N(6)-(1,2-dicarboxyethyl)-AMP + GDP + phosphate + 2 H(+). Its pathway is purine metabolism; AMP biosynthesis via de novo pathway; AMP from IMP: step 1/2. Plays an important role in the de novo pathway of purine nucleotide biosynthesis. Catalyzes the first committed step in the biosynthesis of AMP from IMP. The chain is Adenylosuccinate synthetase from Pseudomonas fluorescens (strain ATCC BAA-477 / NRRL B-23932 / Pf-5).